Reading from the N-terminus, the 279-residue chain is 4-hydroxy-3-methylbut-2-enyl diphosphate reductase (279 aa).

A [4Fe-4S] cluster-binding site is contributed by C12. The (2E)-4-hydroxy-3-methylbut-2-enyl diphosphate site is built by H42 and H74. Positions 42 and 74 each coordinate dimethylallyl diphosphate. H42 and H74 together coordinate isopentenyl diphosphate. C96 provides a ligand contact to [4Fe-4S] cluster. H124 serves as a coordination point for (2E)-4-hydroxy-3-methylbut-2-enyl diphosphate. H124 contributes to the dimethylallyl diphosphate binding site. Residue H124 participates in isopentenyl diphosphate binding. E126 (proton donor) is an active-site residue. A (2E)-4-hydroxy-3-methylbut-2-enyl diphosphate-binding site is contributed by T162. [4Fe-4S] cluster is bound at residue C190. (2E)-4-hydroxy-3-methylbut-2-enyl diphosphate contacts are provided by S218, S219, N220, and S263. Positions 218, 219, 220, and 263 each coordinate dimethylallyl diphosphate. Isopentenyl diphosphate is bound by residues S218, S219, N220, and S263.

The protein belongs to the IspH family. Requires [4Fe-4S] cluster as cofactor.

The enzyme catalyses isopentenyl diphosphate + 2 oxidized [2Fe-2S]-[ferredoxin] + H2O = (2E)-4-hydroxy-3-methylbut-2-enyl diphosphate + 2 reduced [2Fe-2S]-[ferredoxin] + 2 H(+). It catalyses the reaction dimethylallyl diphosphate + 2 oxidized [2Fe-2S]-[ferredoxin] + H2O = (2E)-4-hydroxy-3-methylbut-2-enyl diphosphate + 2 reduced [2Fe-2S]-[ferredoxin] + 2 H(+). The protein operates within isoprenoid biosynthesis; dimethylallyl diphosphate biosynthesis; dimethylallyl diphosphate from (2E)-4-hydroxy-3-methylbutenyl diphosphate: step 1/1. It participates in isoprenoid biosynthesis; isopentenyl diphosphate biosynthesis via DXP pathway; isopentenyl diphosphate from 1-deoxy-D-xylulose 5-phosphate: step 6/6. Catalyzes the conversion of 1-hydroxy-2-methyl-2-(E)-butenyl 4-diphosphate (HMBPP) into a mixture of isopentenyl diphosphate (IPP) and dimethylallyl diphosphate (DMAPP). Acts in the terminal step of the DOXP/MEP pathway for isoprenoid precursor biosynthesis. This is 4-hydroxy-3-methylbut-2-enyl diphosphate reductase from Alkaliphilus oremlandii (strain OhILAs) (Clostridium oremlandii (strain OhILAs)).